Here is an 88-residue protein sequence, read N- to C-terminus: Large ribosomal subunit protein bL31B (88 aa).

This sequence belongs to the bacterial ribosomal protein bL31 family. Type B subfamily. Part of the 50S ribosomal subunit.

The polypeptide is Large ribosomal subunit protein bL31B (Leuconostoc citreum (strain KM20)).